Here is a 307-residue protein sequence, read N- to C-terminus: Melanoma-associated antigen F1 (307 aa).

The interval 1 to 55 (MLQTPESRGLPVPQAEGEKDGGHDGETRAPTASQERPKEELGAGREEGAAEPALT) is disordered. 2 stretches are compositionally biased toward basic and acidic residues: residues 16 to 27 (EGEKDGGHDGET) and 35 to 48 (ERPK…REEG). The 202-residue stretch at 76-277 (LNRTVAELVQ…HWPVQYREAL (202 aa)) folds into the MAGE domain.

Interacts (via MAGE domain) with RING-type zinc finger-containing E3 ubiquitin-protein ligases LNX1, TRIM27 and NSMCE1; the interaction is direct. As to expression, ubiquitous.

Its function is as follows. Enhances ubiquitin ligase activity of RING-type zinc finger-containing E3 ubiquitin ligases. Proposed to act through recruitment and/or stabilization of the E2 ubiquitin-conjugating enzyme at the E3:substrate complex. MAGEF1-NSMCE1 ubiquitin ligase complex promotes proteasomal degradation of MMS19, a key component of the cytosolic iron-sulfur protein assembly (CIA) machinery. Down-regulation of MMS19 impairs the activity of several DNA repair and metabolism enzymes such as ERCC2/XPD, FANCJ, RTEL1 and POLD1 that require iron-sulfur clusters as cofactors. May negatively regulate genome integrity by inhibiting homologous recombination-mediated double-strand break DNA repair. This is Melanoma-associated antigen F1 from Homo sapiens (Human).